Here is a 66-residue protein sequence, read N- to C-terminus: COP-associated protein (66 aa).

Residues 1–66 (MKATFQVPSI…ALLDAGQEVV (66 aa)) form the HMA domain. Cu cation-binding residues include C12 and C15. A disulfide bridge links C12 with C15.

Part of a cation-transporting system which is associated with copper export out of the H.pylori cells. This is COP-associated protein (copP) from Helicobacter pylori (strain ATCC 700392 / 26695) (Campylobacter pylori).